The primary structure comprises 182 residues: MAEFPSKVNTRTSSPAQGGGAVVSTLSPDLGFVRSSLGALMLLQLVLGLLVWALIADTPYHLYPSYGWVMFVAVFLWLVTIIFFVLYLFQLHMKLYMVPWPLVLMVFNVGATVLYITAFITCSASVELTSLKGSQPYNQRAAASFFSCLVMIAYGVSAFLSFQAWRGVGSNAATSQMAGGYA.

The segment at 1 to 20 is disordered; the sequence is MAEFPSKVNTRTSSPAQGGG. Topologically, residues 1–35 are cytoplasmic; sequence MAEFPSKVNTRTSSPAQGGGAVVSTLSPDLGFVRS. Over residues 7–16 the composition is skewed to polar residues; that stretch reads KVNTRTSSPA. In terms of domain architecture, MARVEL spans 32–166; sequence FVRSSLGALM…SAFLSFQAWR (135 aa). The chain crosses the membrane as a helical span at residues 36–56; sequence SLGALMLLQLVLGLLVWALIA. The Extracellular segment spans residues 57-68; that stretch reads DTPYHLYPSYGW. The chain crosses the membrane as a helical span at residues 69 to 89; that stretch reads VMFVAVFLWLVTIIFFVLYLF. Topologically, residues 90-99 are cytoplasmic; it reads QLHMKLYMVP. The helical transmembrane segment at 100–120 threads the bilayer; sequence WPLVLMVFNVGATVLYITAFI. The Extracellular portion of the chain corresponds to 121–141; the sequence is TCSASVELTSLKGSQPYNQRA. Residues 142 to 162 traverse the membrane as a helical segment; sequence AASFFSCLVMIAYGVSAFLSF. The Cytoplasmic segment spans residues 163–182; the sequence is QAWRGVGSNAATSQMAGGYA.

It belongs to the MAL family. Forms oligomers. Phosphorylated.

The protein resides in the cell membrane. It localises to the myelin membrane. The protein localises to the apical cell membrane. Functionally, main component of the myelin sheath that plays an important role in myelin membrane biogenesis and myelination. Plays an essential function in apical endocytosis. Regulates epithelial development through the regulation of apical endocytosis. Part of the intracellular machinery that mediates basolateral-to-apical transport of ICAM-1, an essential adhesion receptor in epithelial cells, from the subapical compartment in hepatic epithelial cells. This is Plasmolipin (PLLP) from Bos taurus (Bovine).